The primary structure comprises 393 residues: Carbamoyl phosphate synthase small chain (393 aa).

The interval 1–194 (MSKDTTTYQG…TYVIEAEGEE (194 aa)) is CPSase. L-glutamine contacts are provided by S61, G245, and G247. Positions 195-390 (RHTVVAYDLG…VELMDADAQK (196 aa)) constitute a Glutamine amidotransferase type-1 domain. The active-site Nucleophile is the C273. The L-glutamine site is built by F274, Q277, N315, G317, and F318. Active-site residues include H363 and E365.

The protein belongs to the CarA family. Composed of two chains; the small (or glutamine) chain promotes the hydrolysis of glutamine to ammonia, which is used by the large (or ammonia) chain to synthesize carbamoyl phosphate. Tetramer of heterodimers (alpha,beta)4.

The catalysed reaction is hydrogencarbonate + L-glutamine + 2 ATP + H2O = carbamoyl phosphate + L-glutamate + 2 ADP + phosphate + 2 H(+). It catalyses the reaction L-glutamine + H2O = L-glutamate + NH4(+). The protein operates within amino-acid biosynthesis; L-arginine biosynthesis; carbamoyl phosphate from bicarbonate: step 1/1. It participates in pyrimidine metabolism; UMP biosynthesis via de novo pathway; (S)-dihydroorotate from bicarbonate: step 1/3. Functionally, small subunit of the glutamine-dependent carbamoyl phosphate synthetase (CPSase). CPSase catalyzes the formation of carbamoyl phosphate from the ammonia moiety of glutamine, carbonate, and phosphate donated by ATP, constituting the first step of 2 biosynthetic pathways, one leading to arginine and/or urea and the other to pyrimidine nucleotides. The small subunit (glutamine amidotransferase) binds and cleaves glutamine to supply the large subunit with the substrate ammonia. The polypeptide is Carbamoyl phosphate synthase small chain (Corynebacterium glutamicum (strain ATCC 13032 / DSM 20300 / JCM 1318 / BCRC 11384 / CCUG 27702 / LMG 3730 / NBRC 12168 / NCIMB 10025 / NRRL B-2784 / 534)).